The primary structure comprises 337 residues: Schlafen family member 1 (337 aa).

A disordered region spans residues 147-166; sequence AGGRSPSARPSDRPGDDTQE. Basic and acidic residues predominate over residues 156 to 166; the sequence is PSDRPGDDTQE.

This sequence belongs to the Schlafen family. In terms of assembly, interacts with DNAJB6; promoting nuclear translocation and ability to promote cell-cycle arrest. Mainly expressed in the thymus, lymph node and spleen. Specifically expressed in T-lineage cells, but not in B-cells. Strongly up-regulated during the differentiation from CD4(+)CD8(+) double-positive (DP) to CD4(+) or CD8(+) single-positive (SP) thymocytes. Highly expressed in quiescent single-positive thymocytes and T-cells. The expression substantially decreases after TCR (T-cell receptor)-mediated activation.

It is found in the cytoplasm. It localises to the nucleus. Protein expressed in resting T-cells, which is required for maintaining T-cells in the quiescent state. Acts by promoting cell-cycle arrest of T-cells through inhibiting the expression of cyclin-D1 (CCND1). In Mus musculus (Mouse), this protein is Schlafen family member 1.